The following is a 359-amino-acid chain: DNA replication and repair protein RecF (359 aa).

ATP is bound at residue 30–37; sequence GKNGIGKT.

It belongs to the RecF family.

The protein localises to the cytoplasm. In terms of biological role, the RecF protein is involved in DNA metabolism; it is required for DNA replication and normal SOS inducibility. RecF binds preferentially to single-stranded, linear DNA. It also seems to bind ATP. The protein is DNA replication and repair protein RecF of Flavobacterium johnsoniae (strain ATCC 17061 / DSM 2064 / JCM 8514 / BCRC 14874 / CCUG 350202 / NBRC 14942 / NCIMB 11054 / UW101) (Cytophaga johnsonae).